We begin with the raw amino-acid sequence, 146 residues long: Basic phospholipase A2 beta-bungarotoxin A1 chain (146 aa).

The signal sequence occupies residues 1-19 (MNPAHLLVLPAVCVSFLGA). Positions 20–27 (SIIPPQSL) are excised as a propeptide. Intrachain disulfides connect cysteine 54–cysteine 145, cysteine 56–cysteine 72, cysteine 71–cysteine 126, cysteine 78–cysteine 119, cysteine 87–cysteine 112, and cysteine 105–cysteine 117. Ca(2+)-binding residues include tyrosine 55, glycine 57, and glycine 59. Residue histidine 75 is part of the active site. Ca(2+) is bound at residue aspartate 76. Aspartate 120 is an active-site residue.

This sequence belongs to the phospholipase A2 family. Group I subfamily. D49 sub-subfamily. Heterodimer with beta-bungarotoxin B chain; disulfide-linked. The A chain has phospholipase A2 activity and the B chain shows homology with the basic protease inhibitors. Ca(2+) serves as cofactor. Expressed by the venom gland.

It localises to the secreted. The enzyme catalyses a 1,2-diacyl-sn-glycero-3-phosphocholine + H2O = a 1-acyl-sn-glycero-3-phosphocholine + a fatty acid + H(+). Functionally, snake venom phospholipase A2 (PLA2) that inhibits neuromuscular transmission by blocking acetylcholine release from the nerve termini. PLA2 catalyzes the calcium-dependent hydrolysis of the 2-acyl groups in 3-sn-phosphoglycerides. This is Basic phospholipase A2 beta-bungarotoxin A1 chain from Bungarus flaviceps flaviceps (Red-headed krait).